The chain runs to 218 residues: Redox-sensing transcriptional repressor Rex (218 aa).

A DNA-binding region (H-T-H motif) is located at residues 18–57 (LYYRFIQSLHASGKQRVSSAELSEAVKVDSATIRRDFSYF). An NAD(+)-binding site is contributed by 92–97 (GVGHLG).

The protein belongs to the transcriptional regulatory Rex family. As to quaternary structure, homodimer.

The protein resides in the cytoplasm. Its function is as follows. Modulates transcription in response to changes in cellular NADH/NAD(+) redox state. In Exiguobacterium sp. (strain ATCC BAA-1283 / AT1b), this protein is Redox-sensing transcriptional repressor Rex.